Here is a 124-residue protein sequence, read N- to C-terminus: Small ribosomal subunit protein uS12 (124 aa).

Asp-89 carries the post-translational modification 3-methylthioaspartic acid.

The protein belongs to the universal ribosomal protein uS12 family. In terms of assembly, part of the 30S ribosomal subunit. Contacts proteins S8 and S17. May interact with IF1 in the 30S initiation complex.

Functionally, with S4 and S5 plays an important role in translational accuracy. Its function is as follows. Interacts with and stabilizes bases of the 16S rRNA that are involved in tRNA selection in the A site and with the mRNA backbone. Located at the interface of the 30S and 50S subunits, it traverses the body of the 30S subunit contacting proteins on the other side and probably holding the rRNA structure together. The combined cluster of proteins S8, S12 and S17 appears to hold together the shoulder and platform of the 30S subunit. The sequence is that of Small ribosomal subunit protein uS12 from Nitratiruptor sp. (strain SB155-2).